Consider the following 1179-residue polypeptide: Dynein axonemal assembly factor 9 (1179 aa).

As to quaternary structure, interacts with ARL3.

Its function is as follows. May act as an effector for ARL3. The sequence is that of Dynein axonemal assembly factor 9 from Mus musculus (Mouse).